We begin with the raw amino-acid sequence, 443 residues long: MNIKKCKQLLMSLVVLTLAVTCLAPMSKAKAASDPIDINASAAIMIEASSGKILYSKNADKRLPIASMTKMMTEYLLLEAIDQGKVKWDQTYTPDDYVYEISQDNSLSNVPLRKDGKYTVKELYQATAIYSANAAAIAIAEIVAGSETKFVEKMNAKAKELGLTDYKFVNATGLENKDLHGHQPEGTSVNEESEVSAKDMAVLADHLITDYPEILETSSIAKTKFREGTDDEMDMPNWNFMLKGLVSEYKKATVDGLKTGSTDSAGSCFTGTAERNGMRVITVVLNAKGNLHTGRFDETKKMFDYAFDNFSMKEIYAEGDQVKGHKTISVDKGKEKEVGIVTNKAFSLPVKNGEEKNYKAKVTLNKDNLTAPVKKGTKVGKLTAEYTGDEKDYGFLNSDLAGVDLVTKENVEKANWFVLTMRSIGGFFAGIWGSIVDTVTGWF.

Positions 1 to 31 are cleaved as a signal peptide; the sequence is MNIKKCKQLLMSLVVLTLAVTCLAPMSKAKA. The Acyl-ester intermediate role is filled by Ser67. Lys70 acts as the Proton acceptor in catalysis. The active site involves Ser131. Lys258 contributes to the substrate binding site.

It belongs to the peptidase S11 family.

The protein resides in the secreted. It is found in the cell wall. It localises to the cell membrane. Its subcellular location is the membrane raft. The enzyme catalyses Preferential cleavage: (Ac)2-L-Lys-D-Ala-|-D-Ala. Also transpeptidation of peptidyl-alanyl moieties that are N-acyl substituents of D-alanine.. The protein operates within cell wall biogenesis; peptidoglycan biosynthesis. In terms of biological role, removes C-terminal D-alanyl residues from sugar-peptide cell wall precursors. The sequence is that of D-alanyl-D-alanine carboxypeptidase DacA (dacA) from Bacillus subtilis (strain 168).